We begin with the raw amino-acid sequence, 450 residues long: MRECISVHVGQAGVQIGNACWELYCLEHGIQPDGQMPSDKTIGTGDDSFNTFFSETGSGKHVPRAVYVDLEPTVVDEVRTGTYRQLFHPEQLITGKEDAANNYARGHYTIGKEIVDVVLDRIRKLSDQCTGLQGFLIFHSFGGGTGSGFTSLLMERLSVDYGKKSKLEFAVYPAPQVSTAVVEPYNSILTTHTTLEHSDCAFMVDNEAIYDICRRNLDIERPTYTNLNRLIGQIVSSITASLRFDGALNVELTEFQTNLVPYPRIHFPLVTYSPVISAEKAYHEQLTVAEITNTCFEPQNQMVKCDPRHGKYMACCLLYRGDVVPKDVNAAIAGIKTKRSIQFVDWCPTGFKVGINYQPPTVVPGGDLAKVQRAVCMLSNTTAIAEAWARLDHKFDLMYAKRAFVHWYVGEGMEEGEFSEAREDLAALEKDYEEVGLDSTEAEGGDGEEF.

Gln-11 provides a ligand contact to GTP. Lys-40 is modified (N6-acetyllysine). 7 residues coordinate GTP: Glu-71, Ser-140, Gly-144, Thr-145, Thr-179, Asn-206, and Asn-228. Glu-71 serves as a coordination point for Mg(2+). Glu-254 is an active-site residue.

Belongs to the tubulin family. As to quaternary structure, dimer of alpha and beta chains. A typical microtubule is a hollow water-filled tube with an outer diameter of 25 nm and an inner diameter of 15 nM. Alpha-beta heterodimers associate head-to-tail to form protofilaments running lengthwise along the microtubule wall with the beta-tubulin subunit facing the microtubule plus end conferring a structural polarity. Microtubules usually have 13 protofilaments but different protofilament numbers can be found in some organisms and specialized cells. Requires Mg(2+) as cofactor. Acetylation of alpha chains at Lys-40 stabilizes microtubules and affects affinity and processivity of microtubule motors. This modification has a role in multiple cellular functions, ranging from cell motility, cell cycle progression or cell differentiation to intracellular trafficking and signaling.

The protein localises to the cytoplasm. The protein resides in the cytoskeleton. The enzyme catalyses GTP + H2O = GDP + phosphate + H(+). Tubulin is the major constituent of microtubules, a cylinder consisting of laterally associated linear protofilaments composed of alpha- and beta-tubulin heterodimers. Microtubules grow by the addition of GTP-tubulin dimers to the microtubule end, where a stabilizing cap forms. Below the cap, tubulin dimers are in GDP-bound state, owing to GTPase activity of alpha-tubulin. The protein is Tubulin alpha chain of Tyrophagus putrescentiae (Mold mite).